Consider the following 470-residue polypeptide: Methylenetetrahydrofolate--tRNA-(uracil-5-)-methyltransferase TrmFO (470 aa).

10–15 is an FAD binding site; it reads GAGLAG.

Belongs to the MnmG family. TrmFO subfamily. It depends on FAD as a cofactor.

The protein resides in the cytoplasm. The catalysed reaction is uridine(54) in tRNA + (6R)-5,10-methylene-5,6,7,8-tetrahydrofolate + NADH + H(+) = 5-methyluridine(54) in tRNA + (6S)-5,6,7,8-tetrahydrofolate + NAD(+). It carries out the reaction uridine(54) in tRNA + (6R)-5,10-methylene-5,6,7,8-tetrahydrofolate + NADPH + H(+) = 5-methyluridine(54) in tRNA + (6S)-5,6,7,8-tetrahydrofolate + NADP(+). In terms of biological role, catalyzes the folate-dependent formation of 5-methyl-uridine at position 54 (M-5-U54) in all tRNAs. This Prochlorococcus marinus subsp. pastoris (strain CCMP1986 / NIES-2087 / MED4) protein is Methylenetetrahydrofolate--tRNA-(uracil-5-)-methyltransferase TrmFO.